Here is a 60-residue protein sequence, read N- to C-terminus: Large ribosomal subunit protein uL30 (60 aa).

Belongs to the universal ribosomal protein uL30 family. In terms of assembly, part of the 50S ribosomal subunit.

This Azoarcus sp. (strain BH72) protein is Large ribosomal subunit protein uL30.